The sequence spans 216 residues: Co-chaperone protein SBA1 (216 aa).

Residue Ser2 is modified to N-acetylserine. Positions Val5–Thr108 constitute a CS domain. 2 consecutive repeats follow at residues Ala141–Ala156 and Gly160–Ala174. Residues Gly169–Ala216 are disordered. Residues Glu200 to Ala216 are compositionally biased toward acidic residues.

The protein belongs to the p23/wos2 family. In terms of assembly, interacts with HSP82.

Acts as a co-chaperone. This Saccharomyces cerevisiae (strain ATCC 204508 / S288c) (Baker's yeast) protein is Co-chaperone protein SBA1 (SBA1).